Reading from the N-terminus, the 140-residue chain is Large ribosomal subunit protein uL11 (140 aa).

It belongs to the universal ribosomal protein uL11 family. As to quaternary structure, part of the ribosomal stalk of the 50S ribosomal subunit. Interacts with L10 and the large rRNA to form the base of the stalk. L10 forms an elongated spine to which L12 dimers bind in a sequential fashion forming a multimeric L10(L12)X complex. One or more lysine residues are methylated.

In terms of biological role, forms part of the ribosomal stalk which helps the ribosome interact with GTP-bound translation factors. This is Large ribosomal subunit protein uL11 from Dehalococcoides mccartyi (strain ATCC BAA-2266 / KCTC 15142 / 195) (Dehalococcoides ethenogenes (strain 195)).